The primary structure comprises 254 residues: Phosphoribosylaminoimidazole-succinocarboxamide synthase (254 aa).

Belongs to the SAICAR synthetase family.

The catalysed reaction is 5-amino-1-(5-phospho-D-ribosyl)imidazole-4-carboxylate + L-aspartate + ATP = (2S)-2-[5-amino-1-(5-phospho-beta-D-ribosyl)imidazole-4-carboxamido]succinate + ADP + phosphate + 2 H(+). It participates in purine metabolism; IMP biosynthesis via de novo pathway; 5-amino-1-(5-phospho-D-ribosyl)imidazole-4-carboxamide from 5-amino-1-(5-phospho-D-ribosyl)imidazole-4-carboxylate: step 1/2. This is Phosphoribosylaminoimidazole-succinocarboxamide synthase from Brucella melitensis biotype 2 (strain ATCC 23457).